The following is a 345-amino-acid chain: Microtubule-associated protein Jupiter (345 aa).

The segment covering 1–14 has biased composition (polar residues); the sequence is MISNFDCTDNQASS. Positions 1 to 34 are disordered; that stretch reads MISNFDCTDNQASSKVLRPPGGGSSDIFGSEMPQ. Ser24 is subject to Phosphoserine. Phosphothreonine is present on Thr35. Basic and acidic residues predominate over residues 78–87; it reads QKTVDSHNRL. The disordered stretch occupies residues 78 to 100; the sequence is QKTVDSHNRLFGEPTRPITPGKN. 2 positions are modified to phosphothreonine: Thr92 and Thr96. Ser105, Ser134, and Ser145 each carry phosphoserine. 2 disordered regions span residues 127–241 and 300–345; these read HYNG…QPHS and EGNP…SGLW. Residues 132-145 are compositionally biased toward low complexity; that stretch reads SGSVSSASSSVSSS. The segment covering 146–164 has biased composition (polar residues); it reads TENLKMNSGSRSVFRNMST. Residues 177-191 show a composition bias toward pro residues; it reads LCPPSPVRIEPPTPP. Polar residues-rich tracts occupy residues 212–226 and 315–326; these read DNSTYTKSDQVNEAC and DYNQRQESSNAG.

Belongs to the MAP Jupiter family.

The protein resides in the nucleus. Its subcellular location is the cytoplasm. It localises to the cytoskeleton. It is found in the spindle. In terms of biological role, binds to all microtubule populations. This is Microtubule-associated protein Jupiter from Drosophila erecta (Fruit fly).